The primary structure comprises 165 residues: Protein SprT (165 aa).

Residues 20–163 (EKLTQANLKL…RCVHCGEQLV (144 aa)) enclose the SprT-like domain. His-78 serves as a coordination point for Zn(2+). Glu-79 is an active-site residue. Position 82 (His-82) interacts with Zn(2+).

Belongs to the SprT family. The cofactor is Zn(2+).

It localises to the cytoplasm. This Escherichia coli O139:H28 (strain E24377A / ETEC) protein is Protein SprT.